The primary structure comprises 173 residues: Oleosin 18.5 kDa (173 aa).

Residues 1–45 are polar; it reads MADTARGTHHDIIGRDQYPMMGRDRDQYQMSGRGSDYSKSRQIAK. The segment at 46 to 117 is hydrophobic; that stretch reads AATAVTAGGS…AAITVFSWIY (72 aa). Helical transmembrane passes span 54–74, 76–96, and 97–117; these read GSLL…LTVA, PLLV…ALLI, and TGFL…SWIY. The tract at residues 151–173 is disordered; sequence YYGQQHTGGEHDRDRTRGGQHTT. Basic and acidic residues predominate over residues 158-167; that stretch reads GGEHDRDRTR.

This sequence belongs to the oleosin family.

The protein resides in the lipid droplet. The protein localises to the membrane. Its function is as follows. May have a structural role to stabilize the lipid body during desiccation of the seed by preventing coalescence of the oil. Probably interacts with both lipid and phospholipid moieties of lipid bodies. May also provide recognition signals for specific lipase anchorage in lipolysis during seedling growth. The polypeptide is Oleosin 18.5 kDa (Arabidopsis thaliana (Mouse-ear cress)).